A 453-amino-acid polypeptide reads, in one-letter code: Bifunctional protein GlmU (453 aa).

Residues 1–227 are pyrophosphorylase; it reads MAVSVIILAA…SIEVMGVNDR (227 aa). UDP-N-acetyl-alpha-D-glucosamine is bound by residues 8–11, Lys-22, Gln-73, 78–79, 100–102, Gly-137, Glu-152, Asn-167, and Asn-225; these read LAAG, GT, and SGD. Residue Asp-102 participates in Mg(2+) binding. Mg(2+) is bound at residue Asn-225. Positions 228–248 are linker; it reads QQLAYLERFYQKREAARLMGE. Residues 249-453 are N-acetyltransferase; sequence GVSLSDPDRF…WPGWKRPSKK (205 aa). UDP-N-acetyl-alpha-D-glucosamine contacts are provided by Arg-331 and Lys-349. Residue His-361 is the Proton acceptor of the active site. Positions 364 and 375 each coordinate UDP-N-acetyl-alpha-D-glucosamine. Residues Ala-378, 384-385, Ser-403, Ala-421, and Arg-438 contribute to the acetyl-CoA site; that span reads NY. The tract at residues 430–453 is disordered; that stretch reads PPGELTLSRTPQKSWPGWKRPSKK.

It in the N-terminal section; belongs to the N-acetylglucosamine-1-phosphate uridyltransferase family. In the C-terminal section; belongs to the transferase hexapeptide repeat family. Homotrimer. Requires Mg(2+) as cofactor.

Its subcellular location is the cytoplasm. It catalyses the reaction alpha-D-glucosamine 1-phosphate + acetyl-CoA = N-acetyl-alpha-D-glucosamine 1-phosphate + CoA + H(+). It carries out the reaction N-acetyl-alpha-D-glucosamine 1-phosphate + UTP + H(+) = UDP-N-acetyl-alpha-D-glucosamine + diphosphate. It participates in nucleotide-sugar biosynthesis; UDP-N-acetyl-alpha-D-glucosamine biosynthesis; N-acetyl-alpha-D-glucosamine 1-phosphate from alpha-D-glucosamine 6-phosphate (route II): step 2/2. It functions in the pathway nucleotide-sugar biosynthesis; UDP-N-acetyl-alpha-D-glucosamine biosynthesis; UDP-N-acetyl-alpha-D-glucosamine from N-acetyl-alpha-D-glucosamine 1-phosphate: step 1/1. Its pathway is bacterial outer membrane biogenesis; LPS lipid A biosynthesis. Catalyzes the last two sequential reactions in the de novo biosynthetic pathway for UDP-N-acetylglucosamine (UDP-GlcNAc). The C-terminal domain catalyzes the transfer of acetyl group from acetyl coenzyme A to glucosamine-1-phosphate (GlcN-1-P) to produce N-acetylglucosamine-1-phosphate (GlcNAc-1-P), which is converted into UDP-GlcNAc by the transfer of uridine 5-monophosphate (from uridine 5-triphosphate), a reaction catalyzed by the N-terminal domain. In Nitrosococcus oceani (strain ATCC 19707 / BCRC 17464 / JCM 30415 / NCIMB 11848 / C-107), this protein is Bifunctional protein GlmU.